A 449-amino-acid polypeptide reads, in one-letter code: Glutamyl-tRNA reductase (449 aa).

Substrate is bound by residues 48–51 (TCNR), Ser99, 104–106 (EDQ), and Gln110. Catalysis depends on Cys49, which acts as the Nucleophile. 179-184 (GAGEIG) contacts NADP(+).

Belongs to the glutamyl-tRNA reductase family. In terms of assembly, homodimer.

The enzyme catalyses (S)-4-amino-5-oxopentanoate + tRNA(Glu) + NADP(+) = L-glutamyl-tRNA(Glu) + NADPH + H(+). The protein operates within porphyrin-containing compound metabolism; protoporphyrin-IX biosynthesis; 5-aminolevulinate from L-glutamyl-tRNA(Glu): step 1/2. In terms of biological role, catalyzes the NADPH-dependent reduction of glutamyl-tRNA(Glu) to glutamate 1-semialdehyde (GSA). This chain is Glutamyl-tRNA reductase, found in Methanosarcina barkeri (strain Fusaro / DSM 804).